Reading from the N-terminus, the 327-residue chain is uncharacterized protein (327 aa).

The region spanning K12–E79 is the S4 RNA-binding domain. The active site involves D136.

This sequence belongs to the pseudouridine synthase RluA family.

The enzyme catalyses a uridine in RNA = a pseudouridine in RNA. This is an uncharacterized protein from Helicobacter pylori (strain J99 / ATCC 700824) (Campylobacter pylori J99).